The primary structure comprises 143 residues: Transcriptional regulator MraZ (143 aa).

2 SpoVT-AbrB domains span residues 5-47 (THSP…TTRE) and 76-119 (ANAE…DAGT).

Belongs to the MraZ family. Forms oligomers.

It is found in the cytoplasm. Its subcellular location is the nucleoid. This Clavibacter michiganensis subsp. michiganensis (strain NCPPB 382) protein is Transcriptional regulator MraZ.